A 375-amino-acid chain; its full sequence is Protein arginine N-methyltransferase 6 (375 aa).

The segment at 1 to 36 (MSQPKRRKLESGGGGEGGEGTEEEDGGELEVAVPRP) is disordered. Positions 19–28 (EGTEEEDGGE) are enriched in acidic residues. Threonine 21 bears the Phosphothreonine mark. Asymmetric dimethylarginine; by autocatalysis is present on arginine 38. An SAM-dependent MTase PRMT-type domain is found at 44–374 (DQLYYQCYSD…EEKTKDFAME (331 aa)). 5 residues coordinate S-adenosyl-L-methionine: histidine 57, arginine 66, glycine 90, glutamate 112, and glutamate 141. Catalysis depends on residues glutamate 155 and glutamate 164.

This sequence belongs to the class I-like SAM-binding methyltransferase superfamily. Protein arginine N-methyltransferase family. PRMT6 subfamily. Interacts with (and methylates) HIV-1 Tat, Rev and Nucleocapsid protein p7 (NC). Interacts with EPB41L3 and NCOA1. Automethylation enhances its stability.

It localises to the nucleus. It catalyses the reaction L-arginyl-[protein] + 2 S-adenosyl-L-methionine = N(omega),N(omega)-dimethyl-L-arginyl-[protein] + 2 S-adenosyl-L-homocysteine + 2 H(+). Arginine methyltransferase that can catalyze the formation of both omega-N monomethylarginine (MMA) and asymmetrical dimethylarginine (aDMA), with a strong preference for the formation of aDMA. Preferentially methylates arginyl residues present in a glycine and arginine-rich domain and displays preference for monomethylated substrates. Specifically mediates the asymmetric dimethylation of histone H3 'Arg-2' to form H3R2me2a. H3R2me2a represents a specific tag for epigenetic transcriptional repression and is mutually exclusive with methylation on histone H3 'Lys-4' (H3K4me2 and H3K4me3). Acts as a transcriptional repressor of various genes such as HOXA2, THBS1 and TP53. Repression of TP53 blocks cellular senescence. Also methylates histone H2A and H4 'Arg-3' (H2AR3me and H4R3me, respectively). Acts as a regulator of DNA base excision during DNA repair by mediating the methylation of DNA polymerase beta (POLB), leading to the stimulation of its polymerase activity by enhancing DNA binding and processivity. Methylates HMGA1. Regulates alternative splicing events. Acts as a transcriptional coactivator of a number of steroid hormone receptors including ESR1, ESR2, PGR and NR3C1. Promotes fasting-induced transcriptional activation of the gluconeogenic program through methylation of the CRTC2 transcription coactivator. Methylates GPS2, protecting GPS2 from ubiquitination and degradation. Methylates SIRT7, inhibiting SIRT7 histone deacetylase activity and promoting mitochondria biogenesis. This Bos taurus (Bovine) protein is Protein arginine N-methyltransferase 6 (PRMT6).